The following is a 740-amino-acid chain: Ion-translocating oxidoreductase complex subunit C (740 aa).

4Fe-4S ferredoxin-type domains are found at residues 369–397 (GEPQ…QQLY) and 407–436 (KATT…VQYF). The [4Fe-4S] cluster site is built by C377, C380, C383, C387, C416, C419, C422, and C426. Disordered regions lie at residues 571 to 590 (LEQQ…RKAA) and 602 to 716 (KLEQ…DPRK). Low complexity-rich tracts occupy residues 573-583 (QQQANAEPEQQ) and 637-647 (QQQANAEPEQQ).

Belongs to the 4Fe4S bacterial-type ferredoxin family. RnfC subfamily. In terms of assembly, the complex is composed of six subunits: RsxA, RsxB, RsxC, RsxD, RsxE and RsxG. [4Fe-4S] cluster serves as cofactor.

Its subcellular location is the cell inner membrane. Its function is as follows. Part of a membrane-bound complex that couples electron transfer with translocation of ions across the membrane. Required to maintain the reduced state of SoxR. Probably transfers electron from NAD(P)H to SoxR. This chain is Ion-translocating oxidoreductase complex subunit C, found in Escherichia coli (strain K12).